A 180-amino-acid chain; its full sequence is MYQKDNASLQIDLVFKCNDFSNLSDPFLYQPGNLIFESSFWEEVLLCWINIILSEKNTSFPNFIFDKKIFSLSLQIINNNEISSINQKWMDKSGPTDVLSFPMISDEDTTKNLNFIELGDLFISLEMAFQQSLEFDHSIKKEMLWLASHGFLHLLGWEHNDDNELDNMLNFQEYLISKLD.

Zn(2+) contacts are provided by His-149, His-153, and His-159.

This sequence belongs to the endoribonuclease YbeY family. Zn(2+) serves as cofactor.

The protein localises to the cytoplasm. Functionally, single strand-specific metallo-endoribonuclease involved in late-stage 70S ribosome quality control and in maturation of the 3' terminus of the 16S rRNA. The sequence is that of Endoribonuclease YbeY from Prochlorococcus marinus (strain MIT 9515).